We begin with the raw amino-acid sequence, 271 residues long: Thioredoxin-related transmembrane protein 2 homolog (271 aa).

Residues 1-28 (MTWKKQMALLAKPYYWVNILLAISYLLA) form the signal peptide. Topologically, residues 29–102 (KKTQFICTRL…AILWAYADFR (74 aa)) are extracellular. The helical transmembrane segment at 103 to 123 (YGLGFLLLCVLVGMVLPEPSY) threads the bilayer. One can recognise a Thioredoxin domain in the interval 112–262 (VLVGMVLPEP…YKEAIERLPI (151 aa)). At 124 to 271 (RGPEHITYFR…IAPKEAKKVQ (148 aa)) the chain is on the cytoplasmic side. The Di-lysine motif motif lies at 268–271 (KKVQ).

It is found in the membrane. The sequence is that of Thioredoxin-related transmembrane protein 2 homolog from Drosophila melanogaster (Fruit fly).